The primary structure comprises 175 residues: CDP-archaeol synthase (175 aa).

The next 4 membrane-spanning stretches (helical) occupy residues 41–61 (GLFSGIFCGFLAGCIEIWLSM), 78–98 (YASALIVVLALPSGALFGDMF), 122–142 (FVVGAWFFTYLAAPEWFVSNF), and 150–170 (VLIMTPLLHLTTNIIGYFIGV).

Belongs to the CDP-archaeol synthase family. The cofactor is Mg(2+).

It localises to the cell membrane. The enzyme catalyses 2,3-bis-O-(geranylgeranyl)-sn-glycerol 1-phosphate + CTP + H(+) = CDP-2,3-bis-O-(geranylgeranyl)-sn-glycerol + diphosphate. It participates in membrane lipid metabolism; glycerophospholipid metabolism. In terms of biological role, catalyzes the formation of CDP-2,3-bis-(O-geranylgeranyl)-sn-glycerol (CDP-archaeol) from 2,3-bis-(O-geranylgeranyl)-sn-glycerol 1-phosphate (DGGGP) and CTP. This reaction is the third ether-bond-formation step in the biosynthesis of archaeal membrane lipids. The sequence is that of CDP-archaeol synthase from Methanosarcina acetivorans (strain ATCC 35395 / DSM 2834 / JCM 12185 / C2A).